Here is a 419-residue protein sequence, read N- to C-terminus: Peptide chain release factor subunit 1 (419 aa).

The protein belongs to the eukaryotic release factor 1 family. Heterodimer of two subunits, one of which binds GTP.

It localises to the cytoplasm. In terms of biological role, directs the termination of nascent peptide synthesis (translation) in response to the termination codons UAA, UAG and UGA. The protein is Peptide chain release factor subunit 1 of Methanococcus maripaludis (strain DSM 14266 / JCM 13030 / NBRC 101832 / S2 / LL).